The sequence spans 490 residues: Bifunctional protein HldE (490 aa).

A ribokinase region spans residues 1–330; it reads MFSFDALLQA…RRILPHASLA (330 aa). An ATP-binding site is contributed by 205 to 208; sequence NRKE. Aspartate 275 is a catalytic residue. The cytidylyltransferase stretch occupies residues 358-490; the sequence is FTNGCFDILH…LVARAREGQS (133 aa).

It in the N-terminal section; belongs to the carbohydrate kinase PfkB family. The protein in the C-terminal section; belongs to the cytidylyltransferase family. As to quaternary structure, homodimer.

The catalysed reaction is D-glycero-beta-D-manno-heptose 7-phosphate + ATP = D-glycero-beta-D-manno-heptose 1,7-bisphosphate + ADP + H(+). It carries out the reaction D-glycero-beta-D-manno-heptose 1-phosphate + ATP + H(+) = ADP-D-glycero-beta-D-manno-heptose + diphosphate. It participates in nucleotide-sugar biosynthesis; ADP-L-glycero-beta-D-manno-heptose biosynthesis; ADP-L-glycero-beta-D-manno-heptose from D-glycero-beta-D-manno-heptose 7-phosphate: step 1/4. The protein operates within nucleotide-sugar biosynthesis; ADP-L-glycero-beta-D-manno-heptose biosynthesis; ADP-L-glycero-beta-D-manno-heptose from D-glycero-beta-D-manno-heptose 7-phosphate: step 3/4. In terms of biological role, catalyzes the phosphorylation of D-glycero-D-manno-heptose 7-phosphate at the C-1 position to selectively form D-glycero-beta-D-manno-heptose-1,7-bisphosphate. Its function is as follows. Catalyzes the ADP transfer from ATP to D-glycero-beta-D-manno-heptose 1-phosphate, yielding ADP-D-glycero-beta-D-manno-heptose. In Rhodopseudomonas palustris (strain ATCC BAA-98 / CGA009), this protein is Bifunctional protein HldE.